The primary structure comprises 373 residues: sn-glycerol-3-phosphate import ATP-binding protein UgpC (373 aa).

The 232-residue stretch at 4 to 235 (LTLSNITKSY…PASVFVATFI (232 aa)) folds into the ABC transporter domain. Residue 37–44 (GPSGCGKS) coordinates ATP.

This sequence belongs to the ABC transporter superfamily. sn-glycerol-3-phosphate importer (TC 3.A.1.1.3) family. As to quaternary structure, the complex is composed of two ATP-binding proteins (UgpC), two transmembrane proteins (UgpA and UgpE) and a solute-binding protein (UgpB).

Its subcellular location is the cell inner membrane. It catalyses the reaction sn-glycerol 3-phosphate(out) + ATP + H2O = sn-glycerol 3-phosphate(in) + ADP + phosphate + H(+). Its function is as follows. Part of the ABC transporter complex UgpBAEC involved in sn-glycerol-3-phosphate (G3P) import. Responsible for energy coupling to the transport system. This is sn-glycerol-3-phosphate import ATP-binding protein UgpC from Psychromonas ingrahamii (strain DSM 17664 / CCUG 51855 / 37).